The following is a 45-amino-acid chain: MRIKIEDRKTKRLNFLNSWKPLRLEGRLAAEDIEKLRLLKYENLP.

This is an uncharacterized protein from Archaeoglobus fulgidus (strain ATCC 49558 / DSM 4304 / JCM 9628 / NBRC 100126 / VC-16).